The chain runs to 219 residues: Thiamine-phosphate synthase (219 aa).

Residues 44–48 (QFREK) and asparagine 79 contribute to the 4-amino-2-methyl-5-(diphosphooxymethyl)pyrimidine site. Aspartate 80 and aspartate 99 together coordinate Mg(2+). Residue serine 117 coordinates 4-amino-2-methyl-5-(diphosphooxymethyl)pyrimidine. 143–145 (TST) is a binding site for 2-[(2R,5Z)-2-carboxy-4-methylthiazol-5(2H)-ylidene]ethyl phosphate. Lysine 146 lines the 4-amino-2-methyl-5-(diphosphooxymethyl)pyrimidine pocket. 2-[(2R,5Z)-2-carboxy-4-methylthiazol-5(2H)-ylidene]ethyl phosphate-binding positions include glycine 175 and 195-196 (IS).

The protein belongs to the thiamine-phosphate synthase family. Mg(2+) serves as cofactor.

It catalyses the reaction 2-[(2R,5Z)-2-carboxy-4-methylthiazol-5(2H)-ylidene]ethyl phosphate + 4-amino-2-methyl-5-(diphosphooxymethyl)pyrimidine + 2 H(+) = thiamine phosphate + CO2 + diphosphate. It carries out the reaction 2-(2-carboxy-4-methylthiazol-5-yl)ethyl phosphate + 4-amino-2-methyl-5-(diphosphooxymethyl)pyrimidine + 2 H(+) = thiamine phosphate + CO2 + diphosphate. The catalysed reaction is 4-methyl-5-(2-phosphooxyethyl)-thiazole + 4-amino-2-methyl-5-(diphosphooxymethyl)pyrimidine + H(+) = thiamine phosphate + diphosphate. The protein operates within cofactor biosynthesis; thiamine diphosphate biosynthesis; thiamine phosphate from 4-amino-2-methyl-5-diphosphomethylpyrimidine and 4-methyl-5-(2-phosphoethyl)-thiazole: step 1/1. Its function is as follows. Condenses 4-methyl-5-(beta-hydroxyethyl)thiazole monophosphate (THZ-P) and 2-methyl-4-amino-5-hydroxymethyl pyrimidine pyrophosphate (HMP-PP) to form thiamine monophosphate (TMP). This chain is Thiamine-phosphate synthase, found in Bacillus thuringiensis (strain Al Hakam).